Reading from the N-terminus, the 85-residue chain is UPF0335 protein Oant_1161 (85 aa).

This sequence belongs to the UPF0335 family.

The sequence is that of UPF0335 protein Oant_1161 from Brucella anthropi (strain ATCC 49188 / DSM 6882 / CCUG 24695 / JCM 21032 / LMG 3331 / NBRC 15819 / NCTC 12168 / Alc 37) (Ochrobactrum anthropi).